The sequence spans 721 residues: MAGDLPPGRWSALLVGAWWPARPDAPMAGVTYWRKAAQLKRNEANDLRNERSLLAVNQGRTADDLLERYWRGEQRLATIAHQCEVKSDQSEQVADAVNYLRDRLTEIAQSGNQQINQILAGKGPIEAKVAAVNAVIEQSNAMADHVGATAMSNIIDATQRVFDETIGGDAHTWLRDHGVSLDTPARPRPVTAEDMTSMTANSPAGSPFGAAPSAPSHSTTTSGPPTAPTPTSPFGTAPMVLSSSSTSSGPPTAPTPTSPFGTAPMPPGPPPPGTVSPPLPPSAPAVGVGGPSVPAAGMPPAAAAATAPLSPQSLGQSFTTGMTTGTPAAAGAQALSAGALHAATEPLPPPAPPPTTPTVTTPTVATATTAGIPHIPDSAPTPSPAPIAPPTTDNASAMTPIAPMVANGPPASPAPPAAAPAGPLPAYGADLRPPVTTPPATPPTPTGPISGAAVTPSSPAAGGSLMSPVVNKSTAPATTQAQPSNPTPPLASATAAATTGAAAGDTSRRAAEQQRLRRILDTVARQEPGLSWAAGLRDNGQTTLLVTDLASGWIPPHIRLPAHITLLEPAPRRRHATVTDLLGTTTVAAAHHPHGYLSQPDPDTPALTGDRTARIAPTIDELGPTLVETVRRHDTLPPIAQAVVVAATRNYGVPDNETDLLHHKTTEIHQAVLTTYPNHDIATVVDWMLLAAINALIAGDQSGANYHLAWAIAAISTRRSR.

Disordered stretches follow at residues 196–291 and 370–513; these read TSMT…VGGP and AGIP…AAEQ. Low complexity-rich tracts occupy residues 202 to 224 and 232 to 250; these read SPAG…TSGP and SPFG…SSGP. Pro residues-rich tracts occupy residues 264–283 and 379–389; these read PMPP…PPSA and APTPSPAPIAP. The span at 419-429 shows a compositional bias: low complexity; sequence APAGPLPAYGA. Over residues 435-446 the composition is skewed to pro residues; sequence VTTPPATPPTPT. The span at 470-484 shows a compositional bias: polar residues; the sequence is VNKSTAPATTQAQPS. A compositionally biased stretch (low complexity) spans 491–505; sequence ASATAAATTGAAAGD.

This is an uncharacterized protein from Mycobacterium tuberculosis (strain ATCC 25618 / H37Rv).